A 307-amino-acid chain; its full sequence is Taste receptor type 2 member 10 (307 aa).

Topologically, residues 1–6 are extracellular; the sequence is MLRVVE. A helical membrane pass occupies residues 7–27; it reads GIFIFVVISESVFGVLGNGFI. Topologically, residues 28-42 are cytoplasmic; that stretch reads GLVNCIDCAKNKLST. A helical transmembrane segment spans residues 43 to 63; the sequence is IGFILTGLAISRIFLIWIIIT. Residues 64-100 lie on the Extracellular side of the membrane; the sequence is DGFIQIFSPNIYASSNLIEYISYFWVIGNQSSMWFAT. Residues 101-121 form a helical membrane-spanning segment; sequence SLSIFYFLKIANFSNYIFLWL. The Cytoplasmic segment spans residues 122–126; that stretch reads KSRTN. Residues 127 to 147 traverse the membrane as a helical segment; the sequence is MVLPFMIVFLLISSLLNFAYI. Over 148–179 the chain is Extracellular; it reads AKILNDYKMKNDTVWDLNMYKSEYFIKQILLN. A glycan (N-linked (GlcNAc...) asparagine) is linked at N158. Residues 180 to 200 form a helical membrane-spanning segment; the sequence is LGVIFFFTLSLITCVLLIISL. At 201–227 the chain is on the cytoplasmic side; it reads WRHNRQMQSNVTGLRDSNTEAHVKAMK. The chain crosses the membrane as a helical span at residues 228–248; the sequence is VLISFIILFILYFIGMAIEIS. At 249 to 257 the chain is on the extracellular side; sequence YFTVRENKL. A helical membrane pass occupies residues 258–278; the sequence is LLMFGMTTTAIYPWGHSFILI. The Cytoplasmic portion of the chain corresponds to 279–307; the sequence is LGNSKLKQASLRVLQQLKCCEKRKNLRVT.

It belongs to the G-protein coupled receptor T2R family.

The protein resides in the membrane. In terms of biological role, receptor that may play a role in the perception of bitterness and is gustducin-linked. May play a role in sensing the chemical composition of the gastrointestinal content. The activity of this receptor may stimulate alpha gustducin, mediate PLC-beta-2 activation and lead to the gating of TRPM5. The polypeptide is Taste receptor type 2 member 10 (TAS2R10) (Pan paniscus (Pygmy chimpanzee)).